The chain runs to 312 residues: Ribonuclease Z (312 aa).

Residues H62, H64, D66, H67, H144, D215, and H273 each contribute to the Zn(2+) site. The active-site Proton acceptor is D66.

This sequence belongs to the RNase Z family. In terms of assembly, homodimer. Requires Zn(2+) as cofactor.

It carries out the reaction Endonucleolytic cleavage of RNA, removing extra 3' nucleotides from tRNA precursor, generating 3' termini of tRNAs. A 3'-hydroxy group is left at the tRNA terminus and a 5'-phosphoryl group is left at the trailer molecule.. Its function is as follows. Zinc phosphodiesterase, which displays some tRNA 3'-processing endonuclease activity. Probably involved in tRNA maturation, by removing a 3'-trailer from precursor tRNA. The chain is Ribonuclease Z from Prochlorococcus marinus (strain AS9601).